The following is a 203-amino-acid chain: A-type ATP synthase subunit E (203 aa).

The protein belongs to the V-ATPase E subunit family. Has multiple subunits with at least A(3), B(3), C, D, E, F, H, I and proteolipid K(x).

It localises to the cell membrane. Component of the A-type ATP synthase that produces ATP from ADP in the presence of a proton gradient across the membrane. This chain is A-type ATP synthase subunit E, found in Methanococcus maripaludis (strain C6 / ATCC BAA-1332).